A 115-amino-acid polypeptide reads, in one-letter code: MLSRIQNYTSGLVSKANLLSSKALYYGKVGAEISKQIYLKEGLQPPTVAQFKSVYSNLYKQSLNFALKPTEVLSCLKNIQKNELLKYGAYGIQLIGFYSVGEIIGRRKLVGYKHH.

The residue at position 1 (Met1) is an N-acetylmethionine. Phosphoserine occurs at positions 3 and 62.

It belongs to the ATPase g subunit family. In terms of assembly, F-type ATPases have 2 components, CF(1) - the catalytic core - and CF(0) - the membrane proton channel. In yeast, the dimeric form of ATP synthase consists of 17 polypeptides: alpha, beta, gamma, delta, epsilon, 4 (B), 5 (OSCP), 6 (A), 8, 9 (C), d, E (Tim11), f, g, h, i/j and k. Phosphorylation on Ser-62 impairs ATP synthase dimerization.

The protein localises to the mitochondrion membrane. In terms of biological role, mitochondrial membrane ATP synthase (F(1)F(0) ATP synthase or Complex V) produces ATP from ADP in the presence of a proton gradient across the membrane which is generated by electron transport complexes of the respiratory chain. F-type ATPases consist of two structural domains, F(1) - containing the extramembraneous catalytic core, and F(0) - containing the membrane proton channel, linked together by a central stalk and a peripheral stalk. During catalysis, ATP synthesis in the catalytic domain of F(1) is coupled via a rotary mechanism of the central stalk subunits to proton translocation. Part of the complex F(0) domain. Minor subunit located with subunit a in the membrane. This is ATP synthase subunit g, mitochondrial (ATP20) from Saccharomyces cerevisiae (strain ATCC 204508 / S288c) (Baker's yeast).